We begin with the raw amino-acid sequence, 1094 residues long: Probable arabinosyltransferase C (1094 aa).

A run of 13 helical transmembrane segments spans residues 28–50 (IARY…TPLL), 232–251 (AAMI…LHIL), 264–286 (PARW…WWHF), 341–360 (SIWM…WVIS), 373–392 (TSRA…WLPL), 431–453 (IGAL…LVAI), 466–488 (RFGV…IPIF), 530–552 (SIAR…AMSL), 565–582 (SRRI…MMFT), 586–608 (WTHH…AVAV), 620–642 (TVFA…GWWY), 657–679 (WRWS…AAWF), and 700–722 (LAGI…EVVS). Low complexity predominate over residues 817–831 (GSEPGTEGGTTAAPG). The disordered stretch occupies residues 817–836 (GSEPGTEGGTTAAPGINGSR).

This sequence belongs to the emb family.

It is found in the cell membrane. In terms of biological role, arabinosyl transferase responsible for the polymerization of arabinose into the arabinan of arabinogalactan. This is Probable arabinosyltransferase C (embC) from Mycobacterium bovis (strain ATCC BAA-935 / AF2122/97).